A 279-amino-acid polypeptide reads, in one-letter code: Oxygen-dependent coproporphyrinogen-III oxidase (279 aa).

S102 contributes to the substrate binding site. A divalent metal cation-binding residues include H106 and H116. The active-site Proton donor is the H116. Substrate is bound at residue 118–120 (NTR). Positions 149 and 179 each coordinate a divalent metal cation. Positions 244-279 (YVEFNLLYDRGTKFGLMTDGNVEAILMSLPPVVKFN) are important for dimerization.

The protein belongs to the aerobic coproporphyrinogen-III oxidase family. As to quaternary structure, homodimer. Requires a divalent metal cation as cofactor.

It is found in the cytoplasm. It carries out the reaction coproporphyrinogen III + O2 + 2 H(+) = protoporphyrinogen IX + 2 CO2 + 2 H2O. It participates in porphyrin-containing compound metabolism; protoporphyrin-IX biosynthesis; protoporphyrinogen-IX from coproporphyrinogen-III (O2 route): step 1/1. In terms of biological role, involved in the heme biosynthesis. Catalyzes the aerobic oxidative decarboxylation of propionate groups of rings A and B of coproporphyrinogen-III to yield the vinyl groups in protoporphyrinogen-IX. The protein is Oxygen-dependent coproporphyrinogen-III oxidase of Rickettsia prowazekii (strain Madrid E).